The chain runs to 86 residues: UPF0335 protein BR1752/BS1330_I1746 (86 aa).

The protein belongs to the UPF0335 family.

The chain is UPF0335 protein BR1752/BS1330_I1746 from Brucella suis biovar 1 (strain 1330).